A 322-amino-acid polypeptide reads, in one-letter code: Solute carrier family 25 member 16 (322 aa).

3 Solcar repeats span residues 34-120 (FYWL…YKTF), 128-219 (SGHV…LKSV), and 241-322 (LKTH…AVAF).

Belongs to the mitochondrial carrier (TC 2.A.29) family.

It is found in the mitochondrion inner membrane. May be involved in the transport of coenzyme A in the mitochondrial matrix. Very little is known about the physiological function of this carrier. The protein is Solute carrier family 25 member 16 of Rattus norvegicus (Rat).